We begin with the raw amino-acid sequence, 408 residues long: Dual-specificity RNA methyltransferase RlmN (408 aa).

Glu120 acts as the Proton acceptor in catalysis. A Radical SAM core domain is found at 126-375 (EEGRGTLCIS…IRTPRGRDIL (250 aa)). Cys133 and Cys378 form a disulfide bridge. [4Fe-4S] cluster contacts are provided by Cys140, Cys144, and Cys147. Residues 204–205 (GE), Ser236, 258–260 (SLH), and Asn335 contribute to the S-adenosyl-L-methionine site. Residue Cys378 is the S-methylcysteine intermediate of the active site.

This sequence belongs to the radical SAM superfamily. RlmN family. The cofactor is [4Fe-4S] cluster.

Its subcellular location is the cytoplasm. The catalysed reaction is adenosine(2503) in 23S rRNA + 2 reduced [2Fe-2S]-[ferredoxin] + 2 S-adenosyl-L-methionine = 2-methyladenosine(2503) in 23S rRNA + 5'-deoxyadenosine + L-methionine + 2 oxidized [2Fe-2S]-[ferredoxin] + S-adenosyl-L-homocysteine. It catalyses the reaction adenosine(37) in tRNA + 2 reduced [2Fe-2S]-[ferredoxin] + 2 S-adenosyl-L-methionine = 2-methyladenosine(37) in tRNA + 5'-deoxyadenosine + L-methionine + 2 oxidized [2Fe-2S]-[ferredoxin] + S-adenosyl-L-homocysteine. In terms of biological role, specifically methylates position 2 of adenine 2503 in 23S rRNA and position 2 of adenine 37 in tRNAs. m2A2503 modification seems to play a crucial role in the proofreading step occurring at the peptidyl transferase center and thus would serve to optimize ribosomal fidelity. This is Dual-specificity RNA methyltransferase RlmN from Rhizobium johnstonii (strain DSM 114642 / LMG 32736 / 3841) (Rhizobium leguminosarum bv. viciae).